Reading from the N-terminus, the 131-residue chain is Small ribosomal subunit protein uS8 (131 aa).

It belongs to the universal ribosomal protein uS8 family. As to quaternary structure, part of the 30S ribosomal subunit. Contacts proteins S5 and S12.

One of the primary rRNA binding proteins, it binds directly to 16S rRNA central domain where it helps coordinate assembly of the platform of the 30S subunit. The polypeptide is Small ribosomal subunit protein uS8 (Leptothrix cholodnii (strain ATCC 51168 / LMG 8142 / SP-6) (Leptothrix discophora (strain SP-6))).